The following is a 603-amino-acid chain: NADH-ubiquinone oxidoreductase chain 5 (603 aa).

15 helical membrane passes run Ile4–Leu24, Ile35–Val55, Phe84–Ser104, Leu121–Phe141, Ile177–Glu197, Leu213–Leu233, Thr241–Ile261, Val273–Leu293, Ile301–Asn320, Ala325–Ile347, Met366–Leu386, Leu413–Gly433, Leu457–Thr477, Met480–Val500, and Leu583–Leu603.

It belongs to the complex I subunit 5 family. Core subunit of respiratory chain NADH dehydrogenase (Complex I) which is composed of 45 different subunits.

It is found in the mitochondrion inner membrane. It catalyses the reaction a ubiquinone + NADH + 5 H(+)(in) = a ubiquinol + NAD(+) + 4 H(+)(out). In terms of biological role, core subunit of the mitochondrial membrane respiratory chain NADH dehydrogenase (Complex I) which catalyzes electron transfer from NADH through the respiratory chain, using ubiquinone as an electron acceptor. Essential for the catalytic activity and assembly of complex I. The sequence is that of NADH-ubiquinone oxidoreductase chain 5 (MT-ND5) from Mammuthus primigenius (Siberian woolly mammoth).